A 704-amino-acid polypeptide reads, in one-letter code: Arylphorin (704 aa).

Residues Met-1–Ser-16 form the signal peptide. 3 N-linked (GlcNAc...) asparagine glycosylation sites follow: Asn-73, Asn-212, and Asn-360.

This sequence belongs to the hemocyanin family. In terms of assembly, homohexamer of two stacked trimers; disulfide-linked. In terms of processing, glycosylation at Asn-360 is required for proper folding.

The protein localises to the secreted. It is found in the extracellular space. Functionally, arylphorin is a larval storage protein (LSP) which may serve as a storage protein used primarily as a source of aromatic amino acids for protein synthesis during metamorphosis. It is a constituent of the sclerotizing system of the cuticle, and serves as a carrier for ecdysteroid hormone. This Antheraea pernyi (Chinese oak silk moth) protein is Arylphorin.